The primary structure comprises 242 residues: Uridylate kinase (242 aa).

ATP is bound by residues lysine 15–glycine 18, glycine 58, and arginine 62. Residues aspartate 77 and threonine 139–threonine 146 contribute to the UMP site. Residues threonine 166, tyrosine 172, and aspartate 175 each coordinate ATP.

This sequence belongs to the UMP kinase family. In terms of assembly, homohexamer.

Its subcellular location is the cytoplasm. It catalyses the reaction UMP + ATP = UDP + ADP. It participates in pyrimidine metabolism; CTP biosynthesis via de novo pathway; UDP from UMP (UMPK route): step 1/1. Inhibited by UTP. Catalyzes the reversible phosphorylation of UMP to UDP. The polypeptide is Uridylate kinase (Buchnera aphidicola subsp. Acyrthosiphon pisum (strain APS) (Acyrthosiphon pisum symbiotic bacterium)).